The chain runs to 334 residues: RNA ligase 2 (334 aa).

Positions 1–234 (MFKKYSSLEN…KCKNSKFSEK (234 aa)) are adenylyltransferase. AMP contacts are provided by Glu34, Lys35, Ile36, Asn40, Arg55, and Glu99. Lys35 serves as the catalytic N6-AMP-lysine intermediate. Mg(2+)-binding residues include Ile162, Leu164, Asn166, Glu204, and Tyr206. Residues Lys225 and Lys227 each contribute to the AMP site.

It belongs to the RNA ligase 2 family. Mg(2+) is required as a cofactor. The cofactor is Mn(2+).

It catalyses the reaction ATP + (ribonucleotide)n-3'-hydroxyl + 5'-phospho-(ribonucleotide)m = (ribonucleotide)n+m + AMP + diphosphate.. Its function is as follows. Repairs 3'-OH/5'-PO4 nicks in duplex RNA or RNA:DNA hybrid in which the broken 3'-OH strand is RNA. The nick ligation reaction entails three nucleotidyl transfer steps. In the first step, the RNA ligase reacts with ATP in the absence of nucleic acid to form a covalent ligase-AMP intermediate and release pyrophosphate. In step 2, the ligase-AMP binds to the nicked duplex nucleic acid and transfers the adenylate to the 5'-PO4 terminus to form an adenylylated nicked intermediate. In step 3, the RNA ligase directs the attack of the nick 3'-OH on the 5'-phosphoanhydride linkage, resulting in a repaired 3' - 5' phosphodiester and release of AMP. This is RNA ligase 2 (Y10A) from Enterobacteria phage T4 (Bacteriophage T4).